The sequence spans 311 residues: Acetaldehyde dehydrogenase (311 aa).

Catalysis depends on C131, which acts as the Acyl-thioester intermediate. Residues 162 to 170 (SVGPGTRKN) and N273 contribute to the NAD(+) site.

This sequence belongs to the acetaldehyde dehydrogenase family.

The enzyme catalyses acetaldehyde + NAD(+) + CoA = acetyl-CoA + NADH + H(+). The polypeptide is Acetaldehyde dehydrogenase (Ralstonia pickettii (strain 12J)).